An 87-amino-acid polypeptide reads, in one-letter code: UPF0147 protein AF_2370.1 (87 aa).

It belongs to the UPF0147 family.

The polypeptide is UPF0147 protein AF_2370.1 (Archaeoglobus fulgidus (strain ATCC 49558 / DSM 4304 / JCM 9628 / NBRC 100126 / VC-16)).